A 342-amino-acid polypeptide reads, in one-letter code: Galactose mutarotase (342 aa).

A Phosphoserine modification is found at serine 14. Beta-D-galactose is bound by residues 81–82 and histidine 107; that span reads NR. A Phosphoserine modification is found at serine 124. The Proton donor role is filled by histidine 176. Beta-D-galactose-binding positions include 176-178, aspartate 243, glutamine 279, and glutamate 307; that span reads HSY. The Proton acceptor role is filled by glutamate 307.

Belongs to the aldose epimerase family. Monomer.

Its subcellular location is the cytoplasm. The enzyme catalyses alpha-D-galactose = beta-D-galactose. It catalyses the reaction alpha-D-glucose = beta-D-glucose. It functions in the pathway carbohydrate metabolism; hexose metabolism. The protein operates within carbohydrate metabolism; galactose metabolism. In terms of biological role, mutarotase that catalyzes the interconversion of beta-D-galactose and alpha-D-galactose during galactose metabolism. Beta-D-galactose is metabolized in the liver into glucose 1-phosphate, the primary metabolic fuel, by the action of four enzymes that constitute the Leloir pathway: GALM, GALK1 (galactokinase), GALT (galactose-1-phosphate uridylyltransferase) and GALE (UDP-galactose-4'-epimerase). Involved in the maintenance of the equilibrium between the beta- and alpha-anomers of galactose, therefore ensuring a sufficient supply of the alpha-anomer for GALK1. Also active on D-glucose although shows a preference for galactose over glucose. The chain is Galactose mutarotase (GALM) from Sus scrofa (Pig).